The chain runs to 500 residues: Probable cytosol aminopeptidase (500 aa).

Mn(2+) is bound by residues Lys-265 and Asp-270. Lys-277 is a catalytic residue. Asp-288, Asp-347, and Glu-349 together coordinate Mn(2+). Arg-351 is an active-site residue.

This sequence belongs to the peptidase M17 family. Mn(2+) serves as cofactor.

It is found in the cytoplasm. It catalyses the reaction Release of an N-terminal amino acid, Xaa-|-Yaa-, in which Xaa is preferably Leu, but may be other amino acids including Pro although not Arg or Lys, and Yaa may be Pro. Amino acid amides and methyl esters are also readily hydrolyzed, but rates on arylamides are exceedingly low.. It carries out the reaction Release of an N-terminal amino acid, preferentially leucine, but not glutamic or aspartic acids.. Presumably involved in the processing and regular turnover of intracellular proteins. Catalyzes the removal of unsubstituted N-terminal amino acids from various peptides. This Rickettsia peacockii (strain Rustic) protein is Probable cytosol aminopeptidase.